We begin with the raw amino-acid sequence, 197 residues long: LQLYFPDISRFKDPDASQPEIMLYVAGKTFQWGVLIFSSVTVLASGTAAHAGVSRLMYVMGRDGVFPTRFFGYVHPKRRTPAWNVLLVXAIALLAIKLDLVTATAPINLGALVAFTFVNLSVISQFWIREKRNKTLKDHFNYLILPVCGALTVGALWINLEESSMVLGLIWGGIGLVYXACVTKSFRNPVPQYEDVA.

Transmembrane regions (helical) follow at residues 33–53 (GVLI…HAGV), 85–105 (VLLV…TATA), 107–127 (INLG…SQFW), 140–160 (FNYL…WINL), and 163–183 (SSMV…ACVT).

It belongs to the amino acid-polyamine-organocation (APC) superfamily.

Its subcellular location is the cell inner membrane. The catalysed reaction is putrescine(in) + H(+)(in) = putrescine(out) + H(+)(out). Putrescine importer. This Klebsiella pneumoniae protein is Probable low-affinity putrescine importer PlaP (plaP).